A 366-amino-acid chain; its full sequence is A-type ATP synthase subunit C (366 aa).

The protein belongs to the V-ATPase V0D/AC39 subunit family. Has multiple subunits with at least A(3), B(3), C, D, E, F, H, I and proteolipid K(x).

It localises to the cell membrane. In terms of biological role, component of the A-type ATP synthase that produces ATP from ADP in the presence of a proton gradient across the membrane. This chain is A-type ATP synthase subunit C, found in Thermococcus gammatolerans (strain DSM 15229 / JCM 11827 / EJ3).